Consider the following 313-residue polypeptide: Protoheme IX farnesyltransferase (313 aa).

The next 8 membrane-spanning stretches (helical) occupy residues Val-32 to His-52, Pro-53 to Leu-73, Val-120 to Ile-140, Ile-153 to Gly-173, Leu-180 to Phe-200, Ile-226 to Phe-246, Ala-248 to Val-268, and Leu-284 to Val-304.

Belongs to the UbiA prenyltransferase family. Protoheme IX farnesyltransferase subfamily.

It is found in the cell inner membrane. The enzyme catalyses heme b + (2E,6E)-farnesyl diphosphate + H2O = Fe(II)-heme o + diphosphate. It participates in porphyrin-containing compound metabolism; heme O biosynthesis; heme O from protoheme: step 1/1. Converts heme B (protoheme IX) to heme O by substitution of the vinyl group on carbon 2 of heme B porphyrin ring with a hydroxyethyl farnesyl side group. This Rhodopseudomonas palustris (strain BisB5) protein is Protoheme IX farnesyltransferase.